Here is a 208-residue protein sequence, read N- to C-terminus: Protein-L-isoaspartate O-methyltransferase (208 aa).

Ser59 is a catalytic residue.

Belongs to the methyltransferase superfamily. L-isoaspartyl/D-aspartyl protein methyltransferase family.

The protein resides in the cytoplasm. It carries out the reaction [protein]-L-isoaspartate + S-adenosyl-L-methionine = [protein]-L-isoaspartate alpha-methyl ester + S-adenosyl-L-homocysteine. Its function is as follows. Catalyzes the methyl esterification of L-isoaspartyl residues in peptides and proteins that result from spontaneous decomposition of normal L-aspartyl and L-asparaginyl residues. It plays a role in the repair and/or degradation of damaged proteins. In Photorhabdus laumondii subsp. laumondii (strain DSM 15139 / CIP 105565 / TT01) (Photorhabdus luminescens subsp. laumondii), this protein is Protein-L-isoaspartate O-methyltransferase.